A 437-amino-acid chain; its full sequence is ATP-dependent protease ATPase subunit HslU (437 aa).

ATP-binding positions include Val18, Gly60–Glu65, Asp250, Glu315, and Arg387.

It belongs to the ClpX chaperone family. HslU subfamily. In terms of assembly, a double ring-shaped homohexamer of HslV is capped on each side by a ring-shaped HslU homohexamer. The assembly of the HslU/HslV complex is dependent on binding of ATP.

The protein resides in the cytoplasm. In terms of biological role, ATPase subunit of a proteasome-like degradation complex; this subunit has chaperone activity. The binding of ATP and its subsequent hydrolysis by HslU are essential for unfolding of protein substrates subsequently hydrolyzed by HslV. HslU recognizes the N-terminal part of its protein substrates and unfolds these before they are guided to HslV for hydrolysis. The protein is ATP-dependent protease ATPase subunit HslU of Methylobacterium radiotolerans (strain ATCC 27329 / DSM 1819 / JCM 2831 / NBRC 15690 / NCIMB 10815 / 0-1).